Reading from the N-terminus, the 232-residue chain is 5'-methylthioadenosine/S-adenosylhomocysteine nucleosidase (232 aa).

Glu-12 functions as the Proton acceptor in the catalytic mechanism. Substrate-binding positions include Gly-78, Ile-152, and 173–174 (ME). Catalysis depends on Asp-197, which acts as the Proton donor.

The protein belongs to the PNP/UDP phosphorylase family. MtnN subfamily. In terms of assembly, homodimer.

The catalysed reaction is S-adenosyl-L-homocysteine + H2O = S-(5-deoxy-D-ribos-5-yl)-L-homocysteine + adenine. It catalyses the reaction S-methyl-5'-thioadenosine + H2O = 5-(methylsulfanyl)-D-ribose + adenine. It carries out the reaction 5'-deoxyadenosine + H2O = 5-deoxy-D-ribose + adenine. It participates in amino-acid biosynthesis; L-methionine biosynthesis via salvage pathway; S-methyl-5-thio-alpha-D-ribose 1-phosphate from S-methyl-5'-thioadenosine (hydrolase route): step 1/2. In terms of biological role, catalyzes the irreversible cleavage of the glycosidic bond in both 5'-methylthioadenosine (MTA) and S-adenosylhomocysteine (SAH/AdoHcy) to adenine and the corresponding thioribose, 5'-methylthioribose and S-ribosylhomocysteine, respectively. Also cleaves 5'-deoxyadenosine, a toxic by-product of radical S-adenosylmethionine (SAM) enzymes, into 5-deoxyribose and adenine. Thus, is required for in vivo function of the radical SAM enzymes biotin synthase and lipoic acid synthase, that are inhibited by 5'-deoxyadenosine accumulation. The protein is 5'-methylthioadenosine/S-adenosylhomocysteine nucleosidase of Cronobacter sakazakii (strain ATCC BAA-894) (Enterobacter sakazakii).